Reading from the N-terminus, the 436-residue chain is Tryptophan synthase beta chain (436 aa).

Lys129 is modified (N6-(pyridoxal phosphate)lysine).

This sequence belongs to the TrpB family. As to quaternary structure, tetramer of two alpha and two beta chains. It depends on pyridoxal 5'-phosphate as a cofactor.

It catalyses the reaction (1S,2R)-1-C-(indol-3-yl)glycerol 3-phosphate + L-serine = D-glyceraldehyde 3-phosphate + L-tryptophan + H2O. It participates in amino-acid biosynthesis; L-tryptophan biosynthesis; L-tryptophan from chorismate: step 5/5. In terms of biological role, the beta subunit is responsible for the synthesis of L-tryptophan from indole and L-serine. In Prochlorococcus marinus (strain MIT 9313), this protein is Tryptophan synthase beta chain.